Reading from the N-terminus, the 145-residue chain is Transcription antitermination protein NusB (145 aa).

The protein belongs to the NusB family.

Functionally, involved in transcription antitermination. Required for transcription of ribosomal RNA (rRNA) genes. Binds specifically to the boxA antiterminator sequence of the ribosomal RNA (rrn) operons. This is Transcription antitermination protein NusB from Acetivibrio thermocellus (strain ATCC 27405 / DSM 1237 / JCM 9322 / NBRC 103400 / NCIMB 10682 / NRRL B-4536 / VPI 7372) (Clostridium thermocellum).